The following is a 222-amino-acid chain: Adenylate kinase (222 aa).

A propeptide (removed in mature form) is located at residue Ser-2. N-acetylserine occurs at positions 2 and 3. 16–21 (GAGKGT) is an ATP binding site. Positions 36-65 (ATGDMLRSQIAKGTQLGLEAKKIMDQGGLV) are NMP. AMP contacts are provided by residues Thr-37, Arg-42, 63-65 (GLV), 92-95 (GFPR), and Gln-99. The tract at residues 133 to 170 (GRLIHPASGRSYHKIFNPPKEDMKDDVTGEALVQRSDD) is LID. Residues Arg-134 and 143-144 (SY) each bind ATP. Residues Arg-167 and Arg-178 each coordinate AMP. An ATP-binding site is contributed by Gln-206.

The protein belongs to the adenylate kinase family. AK2 subfamily. As to quaternary structure, monomer.

Its subcellular location is the cytoplasm. It is found in the cytosol. It localises to the mitochondrion intermembrane space. It catalyses the reaction AMP + ATP = 2 ADP. In terms of biological role, catalyzes the reversible transfer of the terminal phosphate group between ATP and AMP. Plays an important role in cellular energy homeostasis and in adenine nucleotide metabolism. Adenylate kinase activity is critical for regulation of the phosphate utilization and the AMP de novo biosynthesis pathways. The polypeptide is Adenylate kinase (Saccharomyces cerevisiae (strain YJM789) (Baker's yeast)).